Consider the following 479-residue polypeptide: Flotillin-like protein 3 (479 aa).

The S-palmitoyl cysteine moiety is linked to residue cysteine 36. Coiled coils occupy residues lysine 227–alanine 251 and glutamate 306–glutamate 326.

This sequence belongs to the band 7/mec-2 family. Flotillin subfamily. May be palmitoylated.

The protein resides in the cell membrane. It is found in the membrane. Its subcellular location is the caveola. In terms of biological role, may act as a scaffolding protein within caveolar membranes, functionally participating in formation of caveolae or caveolae-like vesicles. This chain is Flotillin-like protein 3 (FLOT3), found in Arabidopsis thaliana (Mouse-ear cress).